The sequence spans 839 residues: Probable beta-glucosidase I (839 aa).

A glycan (N-linked (GlcNAc...) asparagine) is linked at asparagine 197. Residue aspartate 225 is part of the active site. Residues aspartate 395–alanine 555 form the PA14 domain.

The protein belongs to the glycosyl hydrolase 3 family.

It localises to the secreted. The catalysed reaction is Hydrolysis of terminal, non-reducing beta-D-glucosyl residues with release of beta-D-glucose.. It functions in the pathway glycan metabolism; cellulose degradation. Its function is as follows. Beta-glucosidases are one of a number of cellulolytic enzymes involved in the degradation of cellulosic biomass. Catalyzes the last step releasing glucose from the inhibitory cellobiose. The protein is Probable beta-glucosidase I (bglI) of Aspergillus terreus (strain NIH 2624 / FGSC A1156).